The primary structure comprises 176 residues: Sperm-egg fusion protein TMEM95 (176 aa).

An N-terminal signal peptide occupies residues 1–16 (MWVLALGGAFLAVAKA). Disulfide bonds link cysteine 17-cysteine 119, cysteine 20-cysteine 122, cysteine 106-cysteine 129, and cysteine 110-cysteine 135. Over 17–146 (CIFCRLQDHA…PDSHDLWDAR (130 aa)) the chain is Extracellular. 2 N-linked (GlcNAc...) asparagine glycosylation sites follow: asparagine 36 and asparagine 118. The chain crosses the membrane as a helical span at residues 147–167 (ILLLCIFGIVLLSGVVSLQVE). The Cytoplasmic portion of the chain corresponds to 168–176 (YLNLQAKDL).

Belongs to the TMEM95 family. As to quaternary structure, does not interact with sperm-egg fusion proteins IZUMO1 or IZUMO1R/JUNO. In terms of processing, N-glycosylated. Expressed exclusively in testis.

Its subcellular location is the cytoplasmic vesicle. The protein resides in the secretory vesicle. It is found in the acrosome membrane. Functionally, sperm protein required for fusion of sperm with the egg membrane during fertilization. The chain is Sperm-egg fusion protein TMEM95 from Mus musculus (Mouse).